A 457-amino-acid polypeptide reads, in one-letter code: Protein unc-93 homolog A (457 aa).

A run of 5 helical transmembrane segments spans residues 8 to 28 (VLVL…LQSL), 42 to 62 (ALST…PVLI), 65 to 85 (LGCK…SLGN), 86 to 106 (FYAS…GAAA), and 140 to 160 (IFFL…SLVF). Asn-190 is a glycosylation site (N-linked (GlcNAc...) asparagine). Helical transmembrane passes span 202-222 (TLLG…AVFL), 257-277 (LRLL…LSGD), 291-311 (FVGY…VLFG), 320-340 (TVLF…LLLW), 344-364 (PSQL…DAVW), and 395-415 (FVIA…YVLL). The tract at residues 438–457 (GPLAAGRTKPAEDGATQTKL) is disordered.

The protein belongs to the unc-93 family.

Its subcellular location is the cell membrane. The polypeptide is Protein unc-93 homolog A (UNC93A) (Bos taurus (Bovine)).